The following is a 496-amino-acid chain: Glutamate--tRNA ligase (496 aa).

The 'HIGH' region signature appears at 10–20 (PSPTGPLHIGG). The 'KMSKS' region motif lies at 251–255 (KMSKR). Lys254 contributes to the ATP binding site.

The protein belongs to the class-I aminoacyl-tRNA synthetase family. Glutamate--tRNA ligase type 1 subfamily. Monomer.

The protein localises to the cytoplasm. It carries out the reaction tRNA(Glu) + L-glutamate + ATP = L-glutamyl-tRNA(Glu) + AMP + diphosphate. Functionally, catalyzes the attachment of glutamate to tRNA(Glu) in a two-step reaction: glutamate is first activated by ATP to form Glu-AMP and then transferred to the acceptor end of tRNA(Glu). This Heliobacterium modesticaldum (strain ATCC 51547 / Ice1) protein is Glutamate--tRNA ligase.